The following is a 155-amino-acid chain: Large-conductance mechanosensitive channel (155 aa).

3 helical membrane-spanning segments follow: residues 16-36 (VVDM…VNNL), 40-60 (VILP…LYII), and 88-108 (GVFL…FLLV).

This sequence belongs to the MscL family. As to quaternary structure, homopentamer.

It is found in the cell inner membrane. Its function is as follows. Channel that opens in response to stretch forces in the membrane lipid bilayer. May participate in the regulation of osmotic pressure changes within the cell. The chain is Large-conductance mechanosensitive channel from Chlorobium chlorochromatii (strain CaD3).